A 348-amino-acid polypeptide reads, in one-letter code: Neuronal growth regulator 1 (348 aa).

Positions 1-31 are cleaved as a signal peptide; that stretch reads MVLLAQGACCSNQWLAAVLLSLCSCLPAGQS. Ig-like C2-type domains follow at residues 32–128, 133–215, and 219–307; these read VDFP…VHLT, PKIY…RVVV, and PTIQ…LPLN. Cysteine 54 and cysteine 112 are oxidised to a cystine. Residues asparagine 67 and asparagine 149 are each glycosylated (N-linked (GlcNAc...) asparagine). Disulfide bonds link cysteine 154-cysteine 197 and cysteine 239-cysteine 291. Tyrosine 181 carries the phosphotyrosine modification. N-linked (GlcNAc...) asparagine glycosylation is found at asparagine 269, asparagine 280, asparagine 288, and asparagine 301. A lipid anchor (GPI-anchor amidated glycine) is attached at glycine 318. A propeptide spans 319–348 (removed in mature form); it reads SACDLFSCWSLALTLSSVISIFYLKNAILQ.

The protein belongs to the immunoglobulin superfamily. IgLON family. In terms of processing, glycosylated. As to expression, highly expressed in brain.

It localises to the cell membrane. Its function is as follows. May be involved in cell-adhesion. May function as a trans-neural growth-promoting factor in regenerative axon sprouting in the mammalian brain. The chain is Neuronal growth regulator 1 (Negr1) from Rattus norvegicus (Rat).